The primary structure comprises 743 residues: Catalase-peroxidase (743 aa).

Residues 1–29 (MNAESGENAGGGCPLGHGAGAPRKRPSNR) are disordered. The segment covering 8–19 (NAGGGCPLGHGA) has biased composition (gly residues). The tryptophyl-tyrosyl-methioninium (Trp-Tyr) (with M-248) cross-link spans 100–222 (WHSAGTYRIT…LGAVQMGLIY (123 aa)). The Proton acceptor role is filled by H101. Positions 222–248 (YVNPEGPNGNPDPKAAAVDIRETFARM) form a cross-link, tryptophyl-tyrosyl-methioninium (Tyr-Met) (with W-100). H263 provides a ligand contact to heme b.

It belongs to the peroxidase family. Peroxidase/catalase subfamily. As to quaternary structure, homodimer or homotetramer. Requires heme b as cofactor. Formation of the three residue Trp-Tyr-Met cross-link is important for the catalase, but not the peroxidase activity of the enzyme.

It carries out the reaction H2O2 + AH2 = A + 2 H2O. It catalyses the reaction 2 H2O2 = O2 + 2 H2O. Bifunctional enzyme with both catalase and broad-spectrum peroxidase activity. The protein is Catalase-peroxidase of Stutzerimonas stutzeri (strain A1501) (Pseudomonas stutzeri).